The chain runs to 60 residues: Large ribosomal subunit protein uL30 (60 aa).

Belongs to the universal ribosomal protein uL30 family. As to quaternary structure, part of the 50S ribosomal subunit.

The polypeptide is Large ribosomal subunit protein uL30 (Salinispora arenicola (strain CNS-205)).